We begin with the raw amino-acid sequence, 252 residues long: Imidazole glycerol phosphate synthase subunit HisF (252 aa).

Residues D11 and D130 contribute to the active site.

The protein belongs to the HisA/HisF family. In terms of assembly, heterodimer of HisH and HisF.

It is found in the cytoplasm. The catalysed reaction is 5-[(5-phospho-1-deoxy-D-ribulos-1-ylimino)methylamino]-1-(5-phospho-beta-D-ribosyl)imidazole-4-carboxamide + L-glutamine = D-erythro-1-(imidazol-4-yl)glycerol 3-phosphate + 5-amino-1-(5-phospho-beta-D-ribosyl)imidazole-4-carboxamide + L-glutamate + H(+). It functions in the pathway amino-acid biosynthesis; L-histidine biosynthesis; L-histidine from 5-phospho-alpha-D-ribose 1-diphosphate: step 5/9. In terms of biological role, IGPS catalyzes the conversion of PRFAR and glutamine to IGP, AICAR and glutamate. The HisF subunit catalyzes the cyclization activity that produces IGP and AICAR from PRFAR using the ammonia provided by the HisH subunit. In Lactiplantibacillus plantarum (strain ATCC BAA-793 / NCIMB 8826 / WCFS1) (Lactobacillus plantarum), this protein is Imidazole glycerol phosphate synthase subunit HisF.